Consider the following 593-residue polypeptide: Dihydroxy-acid dehydratase (593 aa).

Over residues 1 to 17 (MSQQTEPDDDAALDGDE) the composition is skewed to acidic residues. Residues 1-40 (MSQQTEPDDDAALDGDEPGAYGKDERLRSREVTEGPERAP) form a disordered region. The span at 22 to 40 (GKDERLRSREVTEGPERAP) shows a compositional bias: basic and acidic residues. Cys72 provides a ligand contact to [2Fe-2S] cluster. A Mg(2+)-binding site is contributed by Asp104. Cys145 is a [2Fe-2S] cluster binding site. 2 residues coordinate Mg(2+): Asp146 and Lys147. Lys147 bears the N6-carboxylysine mark. [2Fe-2S] cluster is bound at residue Cys217. Glu475 serves as a coordination point for Mg(2+). Residue Ser501 is the Proton acceptor of the active site.

The protein belongs to the IlvD/Edd family. Homodimer. Requires [2Fe-2S] cluster as cofactor. The cofactor is Mg(2+).

The catalysed reaction is (2R)-2,3-dihydroxy-3-methylbutanoate = 3-methyl-2-oxobutanoate + H2O. It carries out the reaction (2R,3R)-2,3-dihydroxy-3-methylpentanoate = (S)-3-methyl-2-oxopentanoate + H2O. It participates in amino-acid biosynthesis; L-isoleucine biosynthesis; L-isoleucine from 2-oxobutanoate: step 3/4. The protein operates within amino-acid biosynthesis; L-valine biosynthesis; L-valine from pyruvate: step 3/4. Functionally, functions in the biosynthesis of branched-chain amino acids. Catalyzes the dehydration of (2R,3R)-2,3-dihydroxy-3-methylpentanoate (2,3-dihydroxy-3-methylvalerate) into 2-oxo-3-methylpentanoate (2-oxo-3-methylvalerate) and of (2R)-2,3-dihydroxy-3-methylbutanoate (2,3-dihydroxyisovalerate) into 2-oxo-3-methylbutanoate (2-oxoisovalerate), the penultimate precursor to L-isoleucine and L-valine, respectively. This Natronomonas pharaonis (strain ATCC 35678 / DSM 2160 / CIP 103997 / JCM 8858 / NBRC 14720 / NCIMB 2260 / Gabara) (Halobacterium pharaonis) protein is Dihydroxy-acid dehydratase.